A 201-amino-acid polypeptide reads, in one-letter code: Prostamide/prostaglandin F synthase (201 aa).

It belongs to the peroxiredoxin-like PRXL2 family. Prostamide/prostaglandin F synthase subfamily.

It localises to the cytoplasm. Its subcellular location is the cytosol. The catalysed reaction is prostaglandin H2 + [thioredoxin]-dithiol = prostaglandin F2alpha + [thioredoxin]-disulfide. It catalyses the reaction prostamide F2alpha + [thioredoxin]-disulfide = prostamide H2 + [thioredoxin]-dithiol. In terms of biological role, catalyzes the reduction of prostaglandin-ethanolamide H(2) (prostamide H(2)) to prostamide F(2alpha) with NADPH as proton donor. Also able to reduce prostaglandin H(2) to prostaglandin F(2alpha). This is Prostamide/prostaglandin F synthase (prxl2b) from Aquarana catesbeiana (American bullfrog).